We begin with the raw amino-acid sequence, 383 residues long: Subtelomeric hrmA-associated cluster protein AFUB_078970 (383 aa).

Disordered regions lie at residues N118–D145 and Q249–P318. Over residues P119–S134 the composition is skewed to low complexity. Residues P318–L364 form the Myb-like domain.

In terms of biological role, myb-like domain-containing protein; part of the subtelomeric hrmA-associated cluster (HAC) containing genes that alter the hyphal surface (such as reduced total chitin or increased beta-glucan exposure) and perturb inter-hyphal interactions within the developing biofilms, resulting in a loss of vertically aligned polarized growing filaments. Consequently, this hypoxia-typic morphotype (called H-MORPH) with altered biofilm architecture leads to increased hypoxia fitness, increased host inflammation, rapid disease progression, and mortality in a murine model of invasive aspergillosis. This is Subtelomeric hrmA-associated cluster protein AFUB_078970 from Aspergillus fumigatus (strain CBS 144.89 / FGSC A1163 / CEA10) (Neosartorya fumigata).